The following is a 330-amino-acid chain: uncharacterized protein (330 aa).

Disordered regions lie at residues 136-160 (VPPS…DESS) and 172-314 (DNEK…SQFN). The span at 223 to 235 (PKPPAPPPPPPVP) shows a compositional bias: pro residues. Residues 236-246 (ISMTPAAISVT) are compositionally biased toward low complexity. Polar residues-rich tracts occupy residues 263–276 (AQST…TTDE), 284–294 (TRSSSQSNSTV), and 304–314 (PASSPTFSQFN).

This is an uncharacterized protein from Danio rerio (Zebrafish).